A 288-amino-acid polypeptide reads, in one-letter code: Nucleotide-binding protein AHA_3920 (288 aa).

An ATP-binding site is contributed by G8 to T15. D56–N59 provides a ligand contact to GTP.

The protein belongs to the RapZ-like family.

In terms of biological role, displays ATPase and GTPase activities. The sequence is that of Nucleotide-binding protein AHA_3920 from Aeromonas hydrophila subsp. hydrophila (strain ATCC 7966 / DSM 30187 / BCRC 13018 / CCUG 14551 / JCM 1027 / KCTC 2358 / NCIMB 9240 / NCTC 8049).